Consider the following 162-residue polypeptide: NADH-quinone oxidoreductase subunit I (162 aa).

2 4Fe-4S ferredoxin-type domains span residues 52 to 82 (LRRY…IEAG) and 93 to 122 (VRYD…EGPN). Residues cysteine 62, cysteine 65, cysteine 68, cysteine 72, cysteine 102, cysteine 105, cysteine 108, and cysteine 112 each contribute to the [4Fe-4S] cluster site.

It belongs to the complex I 23 kDa subunit family. As to quaternary structure, NDH-1 is composed of 14 different subunits. Subunits NuoA, H, J, K, L, M, N constitute the membrane sector of the complex. Requires [4Fe-4S] cluster as cofactor.

It is found in the cell inner membrane. The catalysed reaction is a quinone + NADH + 5 H(+)(in) = a quinol + NAD(+) + 4 H(+)(out). Its function is as follows. NDH-1 shuttles electrons from NADH, via FMN and iron-sulfur (Fe-S) centers, to quinones in the respiratory chain. The immediate electron acceptor for the enzyme in this species is believed to be ubiquinone. Couples the redox reaction to proton translocation (for every two electrons transferred, four hydrogen ions are translocated across the cytoplasmic membrane), and thus conserves the redox energy in a proton gradient. The protein is NADH-quinone oxidoreductase subunit I of Bradyrhizobium sp. (strain BTAi1 / ATCC BAA-1182).